The sequence spans 148 residues: Lipoprotein signal peptidase (148 aa).

The next 2 helical transmembrane spans lie at Gln-57 to Thr-77 and Val-80 to Ile-100. Residues Asp-110 and Asp-126 contribute to the active site. The helical transmembrane segment at Ile-124–Glu-144 threads the bilayer.

It belongs to the peptidase A8 family.

It is found in the cell membrane. The enzyme catalyses Release of signal peptides from bacterial membrane prolipoproteins. Hydrolyzes -Xaa-Yaa-Zaa-|-(S,diacylglyceryl)Cys-, in which Xaa is hydrophobic (preferably Leu), and Yaa (Ala or Ser) and Zaa (Gly or Ala) have small, neutral side chains.. It participates in protein modification; lipoprotein biosynthesis (signal peptide cleavage). Functionally, this protein specifically catalyzes the removal of signal peptides from prolipoproteins. The protein is Lipoprotein signal peptidase of Clostridioides difficile (strain 630) (Peptoclostridium difficile).